The sequence spans 107 residues: FK506-binding protein 1 (107 aa).

Residues 19 to 107 form the PPIase FKBP-type domain; sequence GSNVTVHHAG…VFEVELITFK (89 aa).

It belongs to the FKBP-type PPIase family.

The enzyme catalyses [protein]-peptidylproline (omega=180) = [protein]-peptidylproline (omega=0). Inhibited by both FK506 and rapamycin. Functionally, PPIases accelerate the folding of proteins by catalyzing the cis-trans isomerization of proline imidic peptide bonds in oligopeptides. This Dictyostelium discoideum (Social amoeba) protein is FK506-binding protein 1 (fkbp1).